A 218-amino-acid chain; its full sequence is Adenylate kinase (218 aa).

10–15 (GAGKGT) contributes to the ATP binding site. The tract at residues 30 to 59 (STGDMLRNAAKEGKPLGLEAKKIMDAGQLV) is NMP. Residues threonine 31, arginine 36, 57–59 (QLV), 85–88 (GFPR), and glutamine 92 contribute to the AMP site. An LID region spans residues 122 to 159 (GRRVHLASGRSYHVMFNPPKQEGLDDATGEPLVQRADD). ATP contacts are provided by residues arginine 123 and 132-133 (SY). Arginine 156 and arginine 167 together coordinate AMP. Residue glycine 203 participates in ATP binding.

The protein belongs to the adenylate kinase family. Monomer.

The protein localises to the cytoplasm. It carries out the reaction AMP + ATP = 2 ADP. The protein operates within purine metabolism; AMP biosynthesis via salvage pathway; AMP from ADP: step 1/1. Functionally, catalyzes the reversible transfer of the terminal phosphate group between ATP and AMP. Plays an important role in cellular energy homeostasis and in adenine nucleotide metabolism. The protein is Adenylate kinase of Chlorobium chlorochromatii (strain CaD3).